A 395-amino-acid chain; its full sequence is Multidrug resistance protein MdtL (395 aa).

The next 12 helical transmembrane spans lie at 4 to 24 (FLLC…MYLV), 42 to 62 (IAFS…GKIA), 69 to 89 (PVAI…SRAS), 93 to 113 (LFLS…VVAF), 131 to 151 (LLNG…HLIM), 158 to 178 (SLFY…LFIL), 217 to 237 (VSVI…VMGF), 247 to 267 (ALTA…LGLF), 271 to 291 (TLML…SLAH), 295 to 315 (VTLF…GVAM), 333 to 353 (LGIA…ILGI), and 358 to 378 (MLIG…FSVA).

It belongs to the major facilitator superfamily. DHA1 family. MdtL (TC 2.A.1.2.22) subfamily.

It is found in the cell inner membrane. The chain is Multidrug resistance protein MdtL from Salmonella heidelberg (strain SL476).